The chain runs to 385 residues: Odorant receptor 82a (385 aa).

Over methionine 1–lysine 32 the chain is Cytoplasmic. The chain crosses the membrane as a helical span at residues histidine 33–tyrosine 53. Residues asparagine 54 to threonine 62 are Extracellular-facing. The helical transmembrane segment at alanine 63–alanine 83 threads the bilayer. Topologically, residues asparagine 84–cysteine 131 are cytoplasmic. The chain crosses the membrane as a helical span at residues valine 132–cysteine 152. Topologically, residues arginine 153–threonine 186 are extracellular. A helical membrane pass occupies residues valine 187 to phenylalanine 207. Topologically, residues alanine 208–serine 257 are cytoplasmic. A helical transmembrane segment spans residues isoleucine 258 to isoleucine 278. Residues tyrosine 279–aspartate 290 lie on the Extracellular side of the membrane. A helical transmembrane segment spans residues leucine 291–glycine 311. Residues glycine 312–alanine 357 lie on the Cytoplasmic side of the membrane. A helical transmembrane segment spans residues glycine 358 to isoleucine 378. At threonine 379 to glutamate 385 the chain is on the extracellular side.

It belongs to the insect chemoreceptor superfamily. Heteromeric odorant receptor channel (TC 1.A.69) family. Or1a subfamily. Interacts with Orco. Complexes exist early in the endomembrane system in olfactory sensory neurons (OSNs), coupling these complexes to the conserved ciliary trafficking pathway. Expressed in olfactory sensory neurons in the antenna.

It is found in the cell membrane. Odorant receptor which mediates acceptance or avoidance behavior, depending on its substrates. The odorant receptor repertoire encodes a large collection of odor stimuli that vary widely in identity, intensity, and duration. May form a complex with Orco to form odorant-sensing units, providing sensitive and prolonged odorant signaling and calcium permeability. This is Odorant receptor 82a (Or82a) from Drosophila melanogaster (Fruit fly).